A 506-amino-acid polypeptide reads, in one-letter code: Probable Xaa-Pro aminopeptidase PAAG_05466 (506 aa).

Residues D285, D296, E433, and E471 each contribute to the Mn(2+) site.

Belongs to the peptidase M24B family. The cofactor is Mn(2+).

The enzyme catalyses Release of any N-terminal amino acid, including proline, that is linked to proline, even from a dipeptide or tripeptide.. In terms of biological role, catalyzes the removal of a penultimate prolyl residue from the N-termini of peptides. In Paracoccidioides lutzii (strain ATCC MYA-826 / Pb01) (Paracoccidioides brasiliensis), this protein is Probable Xaa-Pro aminopeptidase PAAG_05466.